Consider the following 643-residue polypeptide: Tigger transposable element-derived protein 5 (643 aa).

A disordered region spans residues 1 to 50; it reads MYSAGPPAVPAPRRCRRPPPGRPMQPPRPPAPAPVPAARPPPPAPGPRPR. Pro residues predominate over residues 20–48; that stretch reads PGRPMQPPRPPAPAPVPAARPPPPAPGPR. In terms of domain architecture, HTH psq-type spans 52 to 103; that stretch reads AVKMAFRKAYSIKDKLQAIERVKGGERQASVCRDFGVPGGTLRGWLKDEPKL. 2 consecutive DNA-binding regions (H-T-H motif) follow at residues 79 to 99 and 150 to 183; these read QASVCRDFGVPGGTLRGWLKD and PLIQAQAEAFARQIYGPECTFKASHGWFWRWQKR. The HTH CENPB-type domain occupies 117-190; the sequence is QRKKMRLANE…QKRHGISSQR (74 aa). Residues 197 to 236 are disordered; sequence PVAAGPAPGPPVKQEPAQPTRAGPLPDRAASTPAPAEGGY. Positions 238–358 constitute a DDE-1 domain; the sequence is DEQIYNANVT…LQQKAVLLVA (121 aa). Positions 366–395 are disordered; that stretch reads EARMPALEESEETRRRCRPEPTGPPEELQT.

Belongs to the tigger transposable element derived protein family.

Its subcellular location is the nucleus. This chain is Tigger transposable element-derived protein 5 (TIGD5), found in Bos taurus (Bovine).